Here is a 269-residue protein sequence, read N- to C-terminus: 3-methyl-2-oxobutanoate hydroxymethyltransferase (269 aa).

The Mg(2+) site is built by Asp-50 and Asp-89. 3-methyl-2-oxobutanoate is bound by residues 50 to 51 (DS), Asp-89, and Lys-118. Glu-120 is a Mg(2+) binding site. Glu-187 (proton acceptor) is an active-site residue.

The protein belongs to the PanB family. As to quaternary structure, homodecamer; pentamer of dimers. Requires Mg(2+) as cofactor.

Its subcellular location is the cytoplasm. The enzyme catalyses 3-methyl-2-oxobutanoate + (6R)-5,10-methylene-5,6,7,8-tetrahydrofolate + H2O = 2-dehydropantoate + (6S)-5,6,7,8-tetrahydrofolate. Its pathway is cofactor biosynthesis; (R)-pantothenate biosynthesis; (R)-pantoate from 3-methyl-2-oxobutanoate: step 1/2. Its function is as follows. Catalyzes the reversible reaction in which hydroxymethyl group from 5,10-methylenetetrahydrofolate is transferred onto alpha-ketoisovalerate to form ketopantoate. This chain is 3-methyl-2-oxobutanoate hydroxymethyltransferase, found in Aliarcobacter butzleri (strain RM4018) (Arcobacter butzleri).